We begin with the raw amino-acid sequence, 272 residues long: NADH-dependent L-xylulose reductase (272 aa).

Leucine 24 and aspartate 78 together coordinate NADP(+). The Proton donor role is filled by serine 160. NADP(+) contacts are provided by tyrosine 175, lysine 179, and isoleucine 208. Tyrosine 175 serves as the catalytic Proton acceptor. Catalysis depends on lysine 179, which acts as the Lowers pKa of active site Tyr.

This sequence belongs to the short-chain dehydrogenases/reductases (SDR) family.

The catalysed reaction is xylitol + NAD(+) = L-xylulose + NADH + H(+). The enzyme catalyses D-arabinitol + NAD(+) = D-ribulose + NADH + H(+). Its function is as follows. NADH-dependent L-xylulose reductase; part of the yeast pathway for L-arabinose catabolism. Reversibly converts L-xylulose to xylitol and D-ribulose to D-arabinitol. It has a much lower activity with D-xylulose. Sugar alcohols can serve as a substrate when the hydroxyl group of C-2 is in the L- and the hydroxyl group of the C-3 is in the D-configuration. Also seems to be specific for sugar alcohols that have not more than 5 carbons since no activity is observed with dulcitol (galactitol), which has the hydroxyl group of C-2 in L- and of C-3 in D-configuration, but is a six-carbon sugar alcohol. The polypeptide is NADH-dependent L-xylulose reductase (Ambrosiozyma monospora (Yeast)).